We begin with the raw amino-acid sequence, 233 residues long: Protein Mis18-alpha (233 aa).

Phosphoserine is present on residues S36, S39, and S40. A Mis18 domain is found at 80–178 (PLVFLCSGCR…NVEAVESYVL (99 aa)). Residues C85, C88, C141, and C144 each contribute to the Zn(2+) site. K162 is covalently cross-linked (Glycyl lysine isopeptide (Lys-Gly) (interchain with G-Cter in SUMO2)). S233 carries the phosphoserine modification.

This sequence belongs to the mis18 family. As to quaternary structure, homodimer, and heterodimer with OIP5/MIS18B. Identified in a complex containing MIS18A, OIP5/MIS18B, MIS18BP1, RBBP7 and RBBP4.

It is found in the nucleus. The protein localises to the chromosome. The protein resides in the centromere. In terms of biological role, required for recruitment of CENPA to centromeres and normal chromosome segregation during mitosis. The chain is Protein Mis18-alpha (MIS18A) from Plecturocebus moloch (Dusky titi monkey).